A 631-amino-acid chain; its full sequence is Phosphomethylpyrimidine synthase (631 aa).

Substrate-binding positions include N239, M268, Y297, H333, 353-355, 394-397, and E433; these read SRG and DGLR. A Zn(2+)-binding site is contributed by H437. Y460 is a substrate binding site. H501 serves as a coordination point for Zn(2+). [4Fe-4S] cluster is bound by residues C581, C584, and C589.

It belongs to the ThiC family. As to quaternary structure, homodimer. The cofactor is [4Fe-4S] cluster.

The enzyme catalyses 5-amino-1-(5-phospho-beta-D-ribosyl)imidazole + S-adenosyl-L-methionine = 4-amino-2-methyl-5-(phosphooxymethyl)pyrimidine + CO + 5'-deoxyadenosine + formate + L-methionine + 3 H(+). Its pathway is cofactor biosynthesis; thiamine diphosphate biosynthesis. Its function is as follows. Catalyzes the synthesis of the hydroxymethylpyrimidine phosphate (HMP-P) moiety of thiamine from aminoimidazole ribotide (AIR) in a radical S-adenosyl-L-methionine (SAM)-dependent reaction. The protein is Phosphomethylpyrimidine synthase of Escherichia coli O6:H1 (strain CFT073 / ATCC 700928 / UPEC).